Consider the following 360-residue polypeptide: 3-isopropylmalate dehydrogenase (360 aa).

Residue Gly-76–Glu-89 coordinates NAD(+). Arg-96, Arg-106, Arg-134, and Asp-224 together coordinate substrate. Asp-224, Asp-248, and Asp-252 together coordinate Mg(2+). Gly-282 to Asn-294 is an NAD(+) binding site.

It belongs to the isocitrate and isopropylmalate dehydrogenases family. LeuB type 1 subfamily. Homodimer. The cofactor is Mg(2+). It depends on Mn(2+) as a cofactor.

The protein localises to the cytoplasm. The enzyme catalyses (2R,3S)-3-isopropylmalate + NAD(+) = 4-methyl-2-oxopentanoate + CO2 + NADH. It functions in the pathway amino-acid biosynthesis; L-leucine biosynthesis; L-leucine from 3-methyl-2-oxobutanoate: step 3/4. Its function is as follows. Catalyzes the oxidation of 3-carboxy-2-hydroxy-4-methylpentanoate (3-isopropylmalate) to 3-carboxy-4-methyl-2-oxopentanoate. The product decarboxylates to 4-methyl-2 oxopentanoate. The protein is 3-isopropylmalate dehydrogenase of Pseudomonas fluorescens (strain Pf0-1).